The chain runs to 203 residues: Dual-action ribosomal maturation protein DarP (203 aa).

Disordered stretches follow at residues 1–31 and 182–203; these read MPPM…SKSQ and GGAS…DDEA. Residues 186–203 show a composition bias toward acidic residues; it reads DSDDEAADDAGDDHDDEA.

Belongs to the DarP family.

It is found in the cytoplasm. Its function is as follows. Member of a network of 50S ribosomal subunit biogenesis factors which assembles along the 30S-50S interface, preventing incorrect 23S rRNA structures from forming. Promotes peptidyl transferase center (PTC) maturation. This Burkholderia cenocepacia (strain HI2424) protein is Dual-action ribosomal maturation protein DarP.